Here is an 888-residue protein sequence, read N- to C-terminus: Translation initiation factor IF-2 (888 aa).

Disordered stretches follow at residues 96-122 (TTKQDESDAAGKRAAEDVSLRTAEAPE) and 158-302 (ELKE…SAPT). Composition is skewed to basic and acidic residues over residues 98–114 (KQDESDAAGKRAAEDVS) and 158–167 (ELKEKQEKRR). Residues 181-206 (TQVQEPGSETAAVSGSVAATQPESTE) show a composition bias toward polar residues. Positions 207-225 (TAAVTPSATITVTTQTTPA) are enriched in low complexity. 2 stretches are compositionally biased toward basic and acidic residues: residues 226–243 (AKERAPQKPAVKPEEKGE) and 253–269 (EAWKDEPVKRRESKARG). Positions 390-559 (SRAPVVTVMG…LLQAEVLELK (170 aa)) constitute a tr-type G domain. The interval 399–406 (GHVDHGKT) is G1. 399–406 (GHVDHGKT) contacts GTP. Positions 424–428 (GITQH) are G2. The G3 stretch occupies residues 445 to 448 (DTPG). GTP is bound by residues 445–449 (DTPGH) and 499–502 (NKMD). Positions 499 to 502 (NKMD) are G4. A G5 region spans residues 535 to 537 (SAK).

The protein belongs to the TRAFAC class translation factor GTPase superfamily. Classic translation factor GTPase family. IF-2 subfamily.

The protein localises to the cytoplasm. Its function is as follows. One of the essential components for the initiation of protein synthesis. Protects formylmethionyl-tRNA from spontaneous hydrolysis and promotes its binding to the 30S ribosomal subunits. Also involved in the hydrolysis of GTP during the formation of the 70S ribosomal complex. The sequence is that of Translation initiation factor IF-2 from Nitrosomonas eutropha (strain DSM 101675 / C91 / Nm57).